A 214-amino-acid chain; its full sequence is ATP-dependent Clp protease proteolytic subunit (214 aa).

Ser114 (nucleophile) is an active-site residue. Residue His139 is part of the active site.

It belongs to the peptidase S14 family. As to quaternary structure, fourteen ClpP subunits assemble into 2 heptameric rings which stack back to back to give a disk-like structure with a central cavity, resembling the structure of eukaryotic proteasomes.

The protein resides in the cytoplasm. It carries out the reaction Hydrolysis of proteins to small peptides in the presence of ATP and magnesium. alpha-casein is the usual test substrate. In the absence of ATP, only oligopeptides shorter than five residues are hydrolyzed (such as succinyl-Leu-Tyr-|-NHMec, and Leu-Tyr-Leu-|-Tyr-Trp, in which cleavage of the -Tyr-|-Leu- and -Tyr-|-Trp bonds also occurs).. Its function is as follows. Cleaves peptides in various proteins in a process that requires ATP hydrolysis. Has a chymotrypsin-like activity. Plays a major role in the degradation of misfolded proteins. The polypeptide is ATP-dependent Clp protease proteolytic subunit (Nitrosomonas europaea (strain ATCC 19718 / CIP 103999 / KCTC 2705 / NBRC 14298)).